A 299-amino-acid polypeptide reads, in one-letter code: Release factor glutamine methyltransferase (299 aa).

Residues 134–138 (GTGSG), aspartate 157, tryptophan 186, and asparagine 203 contribute to the S-adenosyl-L-methionine site. 203 to 206 (NPPY) contacts substrate.

The protein belongs to the protein N5-glutamine methyltransferase family. PrmC subfamily.

The catalysed reaction is L-glutaminyl-[peptide chain release factor] + S-adenosyl-L-methionine = N(5)-methyl-L-glutaminyl-[peptide chain release factor] + S-adenosyl-L-homocysteine + H(+). Its function is as follows. Methylates the class 1 translation termination release factors RF1/PrfA and RF2/PrfB on the glutamine residue of the universally conserved GGQ motif. The chain is Release factor glutamine methyltransferase from Synechocystis sp. (strain ATCC 27184 / PCC 6803 / Kazusa).